The chain runs to 244 residues: 1-(5-phosphoribosyl)-5-[(5-phosphoribosylamino)methylideneamino] imidazole-4-carboxamide isomerase (244 aa).

The active-site Proton acceptor is aspartate 13. Aspartate 132 functions as the Proton donor in the catalytic mechanism.

It belongs to the HisA/HisF family.

The protein localises to the cytoplasm. The enzyme catalyses 1-(5-phospho-beta-D-ribosyl)-5-[(5-phospho-beta-D-ribosylamino)methylideneamino]imidazole-4-carboxamide = 5-[(5-phospho-1-deoxy-D-ribulos-1-ylimino)methylamino]-1-(5-phospho-beta-D-ribosyl)imidazole-4-carboxamide. It functions in the pathway amino-acid biosynthesis; L-histidine biosynthesis; L-histidine from 5-phospho-alpha-D-ribose 1-diphosphate: step 4/9. The polypeptide is 1-(5-phosphoribosyl)-5-[(5-phosphoribosylamino)methylideneamino] imidazole-4-carboxamide isomerase (Renibacterium salmoninarum (strain ATCC 33209 / DSM 20767 / JCM 11484 / NBRC 15589 / NCIMB 2235)).